A 532-amino-acid polypeptide reads, in one-letter code: Omega-hydroxyceramide transacylase (532 aa).

The region spanning 16-185 (ISFSGSGFLS…TGMQPCAFWT (170 aa)) is the PNPLA domain. The GXSXG signature appears at 51-55 (GTSAG). S53 serves as the catalytic Nucleophile. The Proton acceptor role is filled by D172. Residues 172 to 174 (DGG) carry the DGA/G motif. 2 disordered regions span residues 290-457 (PERS…ELGQ) and 489-532 (VTES…SKVQ). The segment covering 310–322 (PHKEWVPKGDGRG) has biased composition (basic and acidic residues). 2 stretches are compositionally biased toward low complexity: residues 380-389 (PPSSTPGSSL) and 397-411 (SPLSPQQQVQPSGSP). The segment covering 517–532 (GFPRHSGSKKPSSKVQ) has biased composition (basic residues).

Expressed in the digestive system. Expressed in the epidermis of skin keratinocytes. Strongly expressed in the granular layer. Expressed in the upper epidermis and eccrine sweat glands of the dermis and in the region of keratin filament bundles, which is more pronounced in upper epidermal layers and in the lower cornified layers.

It localises to the cytoplasm. The enzyme catalyses an N-(omega-hydroxy-ultra-long chain fatty acyl)-sphingoid base + a (9Z,12Z)-octadecadienoyl-containing triacyl-sn-glycerol = an N-[omega-(9Z,12Z-octadecadienoyloxy)-O-ultra-long chain fatty acyl]-sphingoid base + a diacylglycerol. The catalysed reaction is an N-(omega-hydroxy-ultra-long chain fatty acyl)-sphing-4-enine + a (9Z,12Z)-octadecadienoyl-containing triacyl-sn-glycerol = an N-(omega-(9Z,12Z-octadecadienoyloxy)-ultra-long chain fatty acyl)-sphing-4-enine + a diacylglycerol. It catalyses the reaction N-(30-hydroxytriacontanoyl)-sphing-4-enine + 1,2,3-tri-(9Z,12Z)-octadecadienoylglycerol = N-[30-(9Z,12Z-octadecadienoyloxy)-triacontanoyl]-sphing-4-enine + di-(9Z,12Z)-octadecadienoylglycerol. It carries out the reaction N-(28-hydroxyoctacosanoyl)-sphing-4-enine + a (9Z,12Z)-octadecadienoyl-containing triacyl-sn-glycerol = N-(28-(9Z,12Z-octadecadienoyloxy)-octacosanoyl)-sphing-4-enine + a diacylglycerol. The enzyme catalyses N-(32-hydroxydotriacontanoyl)-sphing-4-enine + a (9Z,12Z)-octadecadienoyl-containing triacyl-sn-glycerol = N-(32-(9Z,12Z-octadecadienoyloxy)-dotricontanoyl)-sphing-4-enine + a diacylglycerol. The catalysed reaction is N-(32-hydroxydotriacontenoyl)-sphing-4-enine + a (9Z,12Z)-octadecadienoyl-containing triacyl-sn-glycerol = an N-(32-(9Z,12Z-octadecadienoyloxy)-dotriacontenoyl)-sphing-4-enine + a diacylglycerol. It catalyses the reaction an N-(34-hydroxytetratriacontenoyl)-sphing-4-enine + a (9Z,12Z)-octadecadienoyl-containing triacyl-sn-glycerol = an N-(34-(9Z,12Z-octadecadienoyloxy)-tetratriacontenoyl)-sphing-4-enine + a diacylglycerol. It carries out the reaction an N-(34-hydroxytetratriacontadienoyl)-sphing-4-enine + a (9Z,12Z)-octadecadienoyl-containing triacyl-sn-glycerol = an N-(34-(9Z,12Z-octadecadienoyloxy)-tetratriacontadienoyl)-sphing-4-enine + a diacylglycerol. The enzyme catalyses an N-(36-hydroxyhexatriacontenoyl)-sphing-4-enine + a (9Z,12Z)-octadecadienoyl-containing triacyl-sn-glycerol = an N-(36-(9Z,12Z-octadecadienoyloxy)-hexatriacontenoyl)-sphing-4-enine + a diacylglycerol. The catalysed reaction is an N-(36-hydroxyhexatriacontadienoyl)-sphing-4-enine + a (9Z,12Z)-octadecadienoyl-containing triacyl-sn-glycerol = an N-(36-(9Z,12Z-octadecadienoyloxy)-hexatriacontadienoyl)-sphing-4-enine + a diacylglycerol. It catalyses the reaction an N-(38-hydroxyoctatriacontenoyl)-sphing-4-enine + a (9Z,12Z)-octadecadienoyl-containing triacyl-sn-glycerol = an N-(38-(9Z,12Z-octadecadienoyloxy)-octatriacontenoyl)-sphing-4-enine + a diacylglycerol. In terms of biological role, omega-hydroxyceramide transacylase involved in the synthesis of omega-O-acylceramides (esterified omega-hydroxyacyl-sphingosine; EOS), which are extremely hydrophobic lipids involved in skin barrier formation. Catalyzes the last step of the synthesis of omega-O-acylceramides by transferring linoleic acid from triglycerides to an omega-hydroxyceramide. Omega-O-acylceramides, are required for the biogenesis of lipid lamellae in the stratum corneum and the formation of the cornified lipid envelope which are essential for the epidermis barrier function. These lipids also play a role in keratinocyte differentiation. May also act on omega-hydroxylated ultra-long chain fatty acids (omega-OH ULCFA) and acylglucosylceramides (GlcEOS). This Homo sapiens (Human) protein is Omega-hydroxyceramide transacylase.